The chain runs to 123 residues: Small ribosomal subunit protein uS12cz/uS12cy (123 aa).

It belongs to the universal ribosomal protein uS12 family. As to quaternary structure, part of the 30S ribosomal subunit.

Its subcellular location is the plastid. The protein resides in the chloroplast. With S4 and S5 plays an important role in translational accuracy. Located at the interface of the 30S and 50S subunits. The chain is Small ribosomal subunit protein uS12cz/uS12cy (rps12-A) from Gossypium barbadense (Sea Island cotton).